Reading from the N-terminus, the 76-residue chain is Exodeoxyribonuclease 7 small subunit (76 aa).

Belongs to the XseB family. Heterooligomer composed of large and small subunits.

It localises to the cytoplasm. The enzyme catalyses Exonucleolytic cleavage in either 5'- to 3'- or 3'- to 5'-direction to yield nucleoside 5'-phosphates.. Bidirectionally degrades single-stranded DNA into large acid-insoluble oligonucleotides, which are then degraded further into small acid-soluble oligonucleotides. In Bacillus cereus (strain G9842), this protein is Exodeoxyribonuclease 7 small subunit.